The sequence spans 424 residues: 5-methylthioadenosine/S-adenosylhomocysteine deaminase (424 aa).

2 residues coordinate Zn(2+): histidine 60 and histidine 62. Substrate is bound by residues glutamate 89 and histidine 181. Histidine 208 lines the Zn(2+) pocket. Substrate-binding residues include glutamate 211 and aspartate 296. A Zn(2+)-binding site is contributed by aspartate 296.

It belongs to the metallo-dependent hydrolases superfamily. MTA/SAH deaminase family. Zn(2+) is required as a cofactor.

It catalyses the reaction S-adenosyl-L-homocysteine + H2O + H(+) = S-inosyl-L-homocysteine + NH4(+). The catalysed reaction is S-methyl-5'-thioadenosine + H2O + H(+) = S-methyl-5'-thioinosine + NH4(+). Its function is as follows. Catalyzes the deamination of 5-methylthioadenosine and S-adenosyl-L-homocysteine into 5-methylthioinosine and S-inosyl-L-homocysteine, respectively. Is also able to deaminate adenosine. The protein is 5-methylthioadenosine/S-adenosylhomocysteine deaminase of Thermococcus sibiricus (strain DSM 12597 / MM 739).